The following is a 57-amino-acid chain: UPF0391 membrane protein Atu4467 (57 aa).

2 helical membrane passes run 4–24 (WALI…TGIS) and 33–53 (ILFF…LMAG).

Belongs to the UPF0391 family.

The protein localises to the cell membrane. The polypeptide is UPF0391 membrane protein Atu4467 (Agrobacterium fabrum (strain C58 / ATCC 33970) (Agrobacterium tumefaciens (strain C58))).